We begin with the raw amino-acid sequence, 3526 residues long: WD repeat and FYVE domain-containing protein 3 (3526 aa).

A phosphoserine mark is found at S1942 and S2278. The interval 2285-2981 (LTGSRRNRKE…PHPPKRVRSR (697 aa)) is sufficient for localization to p62 bodies/ALIS. 2 disordered regions span residues 2403-2429 (ETNVASEIPSKQPETPDDIPQKKPARY) and 2459-2522 (SSEG…EKTD). Residues 2468–2477 (EPEHGEDTIA) show a composition bias toward basic and acidic residues. S2492 is modified (phosphoserine). Residues 2531–2656 (EEGEKIQHMY…IRNKVYQRFL (126 aa)) enclose the BEACH-type PH domain. Residues 2586 to 3526 (MHEPIIPRGA…RGSEDGPRNC (941 aa)) form an interaction with SQSTM1 region. A BEACH domain is found at 2683-2976 (GLLSTLVGEK…QLFKKPHPPK (294 aa)). The interval 2981-3526 (RLNGDNAGIS…RGSEDGPRNC (546 aa)) is interaction with ATG5. 4 WD repeats span residues 3077–3115 (SEWGQILCAICPNPKLVITGGTSTVVCVWEMGTSKEKAK), 3125–3164 (GHTDTVTCATASLAYHIIVSGSRDRTCIIWDLNKLSFLTQ), 3167–3206 (GHRAPVSALCINELTGDIVSCAGTYIHVWSINGNPIVSVN), and 3210–3254 (GRSQ…VPET). Residues 3272–3335 (AQIGQEAQDE…SGSDDSRRWS (64 aa)) are disordered. The span at 3278 to 3290 (AQDEDSSDSEADE) shows a compositional bias: acidic residues. The segment at 3313–3363 (AASCRATAAWCTDSGSDDSRRWSDQLSLDEKDGFIFVNYSEGQTRAHLQGP) is interaction with GABARAP. 2 positions are modified to phosphoserine: S3335 and S3339. An LC3-interacting region (LIR) motif is present at residues 3346 to 3349 (FIFV). A WD 5 repeat occupies 3408-3447 (AHPAEVTALGISKDHSRILVGDSRGRVFSWSVSDQPGRSA). The FYVE-type zinc finger occupies 3454–3514 (DEGGDSCSGC…VCQNCYYNLQ (61 aa)). Residues C3460, C3463, C3476, C3479, C3484, C3487, C3506, and C3509 each contribute to the Zn(2+) site.

Directly interacts with ATG5 and associates with the ATG12-ATG5-ATG16L complex. Interacts with p62/SQSTM1; this interaction is required to recruit WDFY3 to cytoplasmic bodies and to PML bodies. Directly interacts with GABARAP, GABARAPL1 and GABARAPL2; the interaction with GABARAP is required for WDFY3 recruitment to MAP1LC3B-positive p62/SQSTM1 bodies. Weakly interacts with MAP1LC3C; this interaction is direct. Does not interact with MAP1LC3A, nor MAP1LC3B. Interacts with TRAF6. As to expression, expressed in osteoclast and their mononuclear precursors (at protein level).

Its subcellular location is the nucleus membrane. The protein localises to the cytoplasm. It localises to the cytosol. It is found in the nucleus. The protein resides in the PML body. Its subcellular location is the membrane. The protein localises to the perikaryon. It localises to the cell projection. It is found in the axon. Its function is as follows. Required for selective macroautophagy (aggrephagy). Acts as an adapter protein by linking specific proteins destined for degradation to the core autophagic machinery members, such as the ATG5-ATG12-ATG16L E3-like ligase, SQSTM1 and LC3. Along with p62/SQSTM1, involved in the formation and autophagic degradation of cytoplasmic ubiquitin-containing inclusions (p62 bodies, ALIS/aggresome-like induced structures). Along with SQSTM1, required to recruit ubiquitinated proteins to PML bodies in the nucleus. Important for normal brain development. Essential for the formation of axonal tracts throughout the brain and spinal cord, including the formation of the major forebrain commissures. Involved in the ability of neural cells to respond to guidance cues. Required for cortical neurons to respond to the trophic effects of netrin-1/NTN1. Regulates Wnt signaling through the removal of DVL3 aggregates, likely in an autophagy-dependent manner. This process may be important for the determination of brain size during embryonic development. May regulate osteoclastogenesis by acting on the TNFSF11/RANKL - TRAF6 pathway. After cytokinetic abscission, involved in midbody remnant degradation. In vitro strongly binds to phosphatidylinositol 3-phosphate (PtdIns3P). In Homo sapiens (Human), this protein is WD repeat and FYVE domain-containing protein 3 (WDFY3).